A 483-amino-acid chain; its full sequence is L-2-hydroxyglutarate dehydrogenase, mitochondrial (483 aa).

Residues 1-67 constitute a mitochondrion transit peptide; that stretch reads MKHKPETAAF…VDASKTIVRG (67 aa).

Belongs to the L2HGDH family. It depends on FAD as a cofactor.

The protein localises to the mitochondrion. The catalysed reaction is (S)-2-hydroxyglutarate + A = 2-oxoglutarate + AH2. In terms of biological role, catalyzes the oxidation of (S)-2-hydroxyglutarate to 2-oxoglutarate. Is specific for the (S) enantiomer and possesses very poor activity toward (R)-2-hydroxyglutarate. Has no activity toward related 2-hydroxy acids, such as glycolate, L-lactate or D-lactate. This is L-2-hydroxyglutarate dehydrogenase, mitochondrial from Arabidopsis thaliana (Mouse-ear cress).